Here is a 277-residue protein sequence, read N- to C-terminus: Diaminopimelate epimerase (277 aa).

The substrate site is built by Asn13, Gln46, and Asn66. Cys75 serves as the catalytic Proton donor. Residues Gly76 to Asn77, Asn159, Asn192, and Glu210 to Arg211 contribute to the substrate site. Catalysis depends on Cys219, which acts as the Proton acceptor. Substrate is bound at residue Gly220–Thr221.

The protein belongs to the diaminopimelate epimerase family. As to quaternary structure, homodimer.

Its subcellular location is the cytoplasm. The enzyme catalyses (2S,6S)-2,6-diaminopimelate = meso-2,6-diaminopimelate. The protein operates within amino-acid biosynthesis; L-lysine biosynthesis via DAP pathway; DL-2,6-diaminopimelate from LL-2,6-diaminopimelate: step 1/1. Its function is as follows. Catalyzes the stereoinversion of LL-2,6-diaminopimelate (L,L-DAP) to meso-diaminopimelate (meso-DAP), a precursor of L-lysine and an essential component of the bacterial peptidoglycan. In Azoarcus sp. (strain BH72), this protein is Diaminopimelate epimerase.